The chain runs to 440 residues: tRNA(Ile)-lysidine synthase (440 aa).

13 to 18 contributes to the ATP binding site; sequence SGGADS.

The protein belongs to the tRNA(Ile)-lysidine synthase family.

Its subcellular location is the cytoplasm. It carries out the reaction cytidine(34) in tRNA(Ile2) + L-lysine + ATP = lysidine(34) in tRNA(Ile2) + AMP + diphosphate + H(+). In terms of biological role, ligates lysine onto the cytidine present at position 34 of the AUA codon-specific tRNA(Ile) that contains the anticodon CAU, in an ATP-dependent manner. Cytidine is converted to lysidine, thus changing the amino acid specificity of the tRNA from methionine to isoleucine. This is tRNA(Ile)-lysidine synthase from Solibacter usitatus (strain Ellin6076).